Here is a 70-residue protein sequence, read N- to C-terminus: DNA-directed RNA polymerase subunit epsilon (70 aa).

This sequence belongs to the RNA polymerase subunit epsilon family. As to quaternary structure, RNAP is composed of a core of 2 alpha, a beta and a beta' subunit. The core is associated with a delta subunit, and at least one of epsilon or omega. When a sigma factor is associated with the core the holoenzyme is formed, which can initiate transcription.

It carries out the reaction RNA(n) + a ribonucleoside 5'-triphosphate = RNA(n+1) + diphosphate. A non-essential component of RNA polymerase (RNAP). This chain is DNA-directed RNA polymerase subunit epsilon, found in Enterococcus faecalis (strain ATCC 700802 / V583).